Consider the following 508-residue polypeptide: Argininosuccinate lyase (508 aa).

It belongs to the lyase 1 family. Argininosuccinate lyase subfamily.

The protein resides in the cytoplasm. The enzyme catalyses 2-(N(omega)-L-arginino)succinate = fumarate + L-arginine. Its pathway is amino-acid biosynthesis; L-arginine biosynthesis; L-arginine from L-ornithine and carbamoyl phosphate: step 3/3. The polypeptide is Argininosuccinate lyase (Methanopyrus kandleri (strain AV19 / DSM 6324 / JCM 9639 / NBRC 100938)).